The following is a 322-amino-acid chain: SUMO-activating enzyme subunit 1A (322 aa).

Residue Met-1 is modified to N-acetylmethionine.

This sequence belongs to the ubiquitin-activating E1 family. In terms of assembly, heterodimer of SAE1A or SAE1B and SAE2. The complex binds SUMO proteins via SAE2.

Its subcellular location is the nucleus. It participates in protein modification; protein sumoylation. In terms of biological role, the dimeric enzyme acts as an E1 ligase for SUMO1 and SUMO2. It mediates ATP-dependent activation of SUMO proteins and formation of a thioester with a conserved cysteine residue on SAE2. Functionally redundant with its paralog SAE1B. This Arabidopsis thaliana (Mouse-ear cress) protein is SUMO-activating enzyme subunit 1A (SAE1A).